The following is a 185-amino-acid chain: Translation initiation factor IF-3 (185 aa).

The protein belongs to the IF-3 family. In terms of assembly, monomer.

It localises to the cytoplasm. Functionally, IF-3 binds to the 30S ribosomal subunit and shifts the equilibrium between 70S ribosomes and their 50S and 30S subunits in favor of the free subunits, thus enhancing the availability of 30S subunits on which protein synthesis initiation begins. The polypeptide is Translation initiation factor IF-3 (Rickettsia prowazekii (strain Madrid E)).